A 589-amino-acid chain; its full sequence is Muscarinic acetylcholine receptor M3 (589 aa).

Over 1-66 (MTLHSNSTTS…DPLGGHTIWQ (66 aa)) the chain is Extracellular. N-linked (GlcNAc...) asparagine glycosylation is found at Asn-6, Asn-15, Asn-41, Asn-48, and Asn-52. The chain crosses the membrane as a helical span at residues 67–90 (VVFIAFLTGFLALVTIIGNILVIV). Residues 91–103 (AFKVNKQLKTVNN) lie on the Cytoplasmic side of the membrane. A helical membrane pass occupies residues 104–129 (YFLLSLACADLIIGVISMNLFTTYII). Topologically, residues 130-141 (MNRWALGNLACD) are extracellular. The cysteines at positions 140 and 220 are disulfide-linked. A helical transmembrane segment spans residues 142–163 (LWLSIDYVASNASVMNLLVISF). The Cytoplasmic portion of the chain corresponds to 164 to 183 (DRYFSITRPLTYRAKRTTKR). Residues 184-205 (AGVMIGLAWVISFVLWAPAILF) form a helical membrane-spanning segment. Residues 206-228 (WQYFVGKRTVPPGECFIQFLSEP) lie on the Extracellular side of the membrane. A helical transmembrane segment spans residues 229-251 (TITFGTAIAAFYMPVTIMTILYW). At 252-490 (RIYKETEKRT…SLIKEKKAAQ (239 aa)) the chain is on the cytoplasmic side. Residues 274 to 280 (AEAENFV) carry the Basolateral sorting signal motif. A disordered region spans residues 323 to 356 (AEQMDQDHSSSDSWNNNDAAASLENSASSDEEDI). A compositionally biased stretch (low complexity) spans 333–344 (SDSWNNNDAAAS). A Phosphoserine modification is found at Ser-384. Residues 491–513 (TLSAILLAFIITWTPYNIMVLVN) traverse the membrane as a helical segment. Residues 514–525 (TFCDSCIPKTYW) lie on the Extracellular side of the membrane. Residues Cys-516 and Cys-519 are joined by a disulfide bond. A helical membrane pass occupies residues 526–545 (NLGYWLCYINSTVNPVCYAL). The Cytoplasmic portion of the chain corresponds to 546–589 (CNKTFRTTFKTLLLCQCDKRKRRKQQYQQRQSVIFHKRVPEQAL).

Belongs to the G-protein coupled receptor 1 family. Muscarinic acetylcholine receptor subfamily. CHRM3 sub-subfamily. Homodimer; the dimers can form tetramers. Interacts with NALCN. Interacts with TMEM147.

It is found in the cell membrane. The protein resides in the postsynaptic cell membrane. The protein localises to the basolateral cell membrane. It localises to the endoplasmic reticulum membrane. The muscarinic acetylcholine receptor mediates various cellular responses, including inhibition of adenylate cyclase, breakdown of phosphoinositides and modulation of potassium channels through the action of G proteins. Primary transducing effect is Pi turnover. The chain is Muscarinic acetylcholine receptor M3 (Chrm3) from Rattus norvegicus (Rat).